Here is a 701-residue protein sequence, read N- to C-terminus: 2-isopropylmalate synthase (701 aa).

Positions 1–40 are disordered; that stretch reads MTTSESPDAYTESFGAHTIVKPAGPPRVGQPSWNPQRASS. Over residues 31 to 40 the composition is skewed to polar residues; sequence PSWNPQRASS. The Pyruvate carboxyltransferase domain occupies 72–346; that stretch reads PLWCAVDLRD…DPQIDFSNID (275 aa). Residues Asp81, His285, His287, and Asn321 each contribute to the Mg(2+) site. Residues 491 to 701 form a regulatory domain region; the sequence is PVRPLERIRQ…VVSAVNRAAR (211 aa). A VNTR1 repeat occupies 575-593; the sequence is VTIASPAQPGEAGRHASDP. The segment at 581–670 is disordered; it reads AQPGEAGRHA…EAGRHASDPV (90 aa). The stretch at 594 to 612 is one VNTR2 repeat; that stretch reads VTIASPAQPGEAGRHASDP. The stretch at 613 to 631 is one VNTR3 repeat; that stretch reads VTIASPAQPGEAGRHASDP. The stretch at 632–650 is one VNTR4 repeat; that stretch reads VTIASPAQPGEAGRHASDP. The stretch at 651-669 is one VNTR5 repeat; it reads VTIASPAQPGEAGRHASDP.

The protein belongs to the alpha-IPM synthase/homocitrate synthase family. LeuA type 2 subfamily. Homodimer. The cofactor is Mg(2+).

The protein resides in the cytoplasm. It catalyses the reaction 3-methyl-2-oxobutanoate + acetyl-CoA + H2O = (2S)-2-isopropylmalate + CoA + H(+). Its pathway is amino-acid biosynthesis; L-leucine biosynthesis; L-leucine from 3-methyl-2-oxobutanoate: step 1/4. In terms of biological role, catalyzes the condensation of the acetyl group of acetyl-CoA with 3-methyl-2-oxobutanoate (2-ketoisovalerate) to form 3-carboxy-3-hydroxy-4-methylpentanoate (2-isopropylmalate). The sequence is that of 2-isopropylmalate synthase from Mycobacterium bovis (strain ATCC BAA-935 / AF2122/97).